The following is a 378-amino-acid chain: Filamin-binding LIM protein 1 (378 aa).

The interval 1–69 (MASKPEKRVA…RSWMPPGRAA (69 aa)) is filamin-binding. Residues 38–179 (WPGRPWESAP…PPPEEPVSFP (142 aa)) form a disordered region. The segment covering 103–115 (LPPPPPPPAADLP) has biased composition (pro residues). LIM zinc-binding domains lie at 186-247 (DICA…TLEK), 248-305 (CGKC…RKFA), and 306-375 (PVCS…RSAA). Residues 281-378 (IGDESFALDS…HVKRSAAGCC (98 aa)) are PLEKHC1-binding.

Interacts with PLEKHC1, FLNA, FLNB and FLNC. Interacts with NKX2-5.

The protein localises to the cell junction. It is found in the focal adhesion. It localises to the cytoplasm. The protein resides in the cytoskeleton. Its subcellular location is the stress fiber. Functionally, serves as an anchoring site for cell-ECM adhesion proteins and filamin-containing actin filaments. Is implicated in cell shape modulation (spreading) and motility. May participate in the regulation of filamin-mediated cross-linking and stabilization of actin filaments. May also regulate the assembly of filamin-containing signaling complexes that control actin assembly. Promotes dissociation of FLNA from ITGB3 and ITGB7. Promotes activation of integrins and regulates integrin-mediated cell-cell adhesion. This chain is Filamin-binding LIM protein 1 (FBLIM1), found in Bos taurus (Bovine).